Consider the following 486-residue polypeptide: Maintenance of mitochondrial morphology protein 1 (486 aa).

Over Met1–Gly19 the chain is Lumenal. The chain crosses the membrane as a helical span at residues Leu20–Phe40. At Gly41–Thr486 the chain is on the cytoplasmic side. Disordered stretches follow at residues Pro45–Leu98, Gln269–Thr318, Val393–Thr412, and Ala420–Thr486. Residues Gln51–Ser61 show a composition bias toward basic residues. Basic and acidic residues predominate over residues Leu70–Pro79. 4 stretches are compositionally biased toward polar residues: residues Ser80–Ser96, Gln269–Ser291, Glu307–Thr318, and Glu401–Thr412. The SMP-LTD domain maps to Gln125–Pro382. Basic and acidic residues-rich tracts occupy residues His429–Arg440 and Asp462–Phe473.

It belongs to the MMM1 family. Homodimer. Component of the ER-mitochondria encounter structure (ERMES) or MDM complex, composed of MMM1, MDM10, MDM12 and MDM34. An MMM1 homodimer associates with one molecule of MDM12 on each side in a pairwise head-to-tail manner, and the SMP-LTD domains of MMM1 and MDM12 generate a continuous hydrophobic tunnel for phospholipid trafficking.

The protein localises to the endoplasmic reticulum membrane. Its function is as follows. Component of the ERMES/MDM complex, which serves as a molecular tether to connect the endoplasmic reticulum (ER) and mitochondria. Components of this complex are involved in the control of mitochondrial shape and protein biogenesis, and function in nonvesicular lipid trafficking between the ER and mitochondria. The MDM12-MMM1 subcomplex functions in the major beta-barrel assembly pathway that is responsible for biogenesis of all outer membrane beta-barrel proteins, and acts in a late step after the SAM complex. The MDM10-MDM12-MMM1 subcomplex further acts in the TOM40-specific pathway after the action of the MDM12-MMM1 complex. Essential for establishing and maintaining the structure of mitochondria and maintenance of mtDNA nucleoids. The chain is Maintenance of mitochondrial morphology protein 1 from Coccidioides immitis (strain RS) (Valley fever fungus).